The primary structure comprises 721 residues: MQGQTQSISFDGREIRLTTGRFAPQAGGSVLVECGDTAVLVTATRSGGREGIDFLPLICDYEERLYAAGRIPGSYQRREGRPPERATLTARLIDRPMRPLFPAWLRDDLQVVATCLSLDERVPADVLAVTGASIATLLAGIPFNGPMAAVRVGLLGDDFVLNPSYREIERGDLDLIVAGTPDGVVMVEAGGNQLPEQDVIEAIDFGYEAICELIKAQEQLLKDLGIEQVKPETPTQDTTVPAYLEKQCTKAISEVLKKFDQTKDERDKALDAIKAEAAEAIAGLKEDDAIRVATASNSKLLGNSFKALTKTLMRQQILKDGKRVDGRALDEVRAISALAGVLPRRVHGSGLFQRGLTQVLSTATLGTPSDAQEMDDLHPSTEKLYLHHYNFPPYSVGETRPMRSPGRREIGHGALAERAILPVLPAKDTFPYVVRVVSEVLSSNGSTSMGSVCGSTLSLMDAGVPLKAPVSGAAMGLIKEGDDIRILTDIQGIEDFLGDMDFKVAGSEKGITALQMDMKITGLPVKTIAEAINQARPARLHILEKMLEAIDTPREGLSPHAPRLLSFRIDPELIGTVIGPGGRTIKGITERTNTKIDIEDSGIVTIASHDGAAADEAQKIIEGLTRKVNEGEVFSGSITRIIPIGAFVEILPGKEGMIHISQLSEARVEKVEDVVKVGDEVTVRVREIDNRGRINLTLRGVPQSGDGAGEEPQPTPVAPLS.

Mg(2+)-binding residues include Asp-495 and Asp-501. In terms of domain architecture, KH spans 562–621; sequence PRLLSFRIDPELIGTVIGPGGRTIKGITERTNTKIDIEDSGIVTIASHDGAAADEAQKII. One can recognise an S1 motif domain in the interval 631–699; the sequence is GEVFSGSITR…NRGRINLTLR (69 aa). A disordered region spans residues 698–721; sequence LRGVPQSGDGAGEEPQPTPVAPLS.

The protein belongs to the polyribonucleotide nucleotidyltransferase family. Mg(2+) serves as cofactor.

Its subcellular location is the cytoplasm. The catalysed reaction is RNA(n+1) + phosphate = RNA(n) + a ribonucleoside 5'-diphosphate. Functionally, involved in mRNA degradation. Catalyzes the phosphorolysis of single-stranded polyribonucleotides processively in the 3'- to 5'-direction. The polypeptide is Polyribonucleotide nucleotidyltransferase (Parasynechococcus marenigrum (strain WH8102)).